The following is a 510-amino-acid chain: Abscisic acid 8'-hydroxylase 2 (510 aa).

Residues 3–23 (FLLFFVFVTAAVLCFVVPAFL) form a helical membrane-spanning segment. Heme is bound at residue Cys-441.

It belongs to the cytochrome P450 family. It depends on heme as a cofactor.

The protein resides in the membrane. The catalysed reaction is 2-cis-(+)-abscisate + reduced [NADPH--hemoprotein reductase] + O2 = (+)-8'-hydroxyabscisate + oxidized [NADPH--hemoprotein reductase] + H2O + H(+). Its pathway is plant hormone degradation; abscisic acid degradation. Involved in the oxidative degradation of abscisic acid. The polypeptide is Abscisic acid 8'-hydroxylase 2 (CYP707A6) (Oryza sativa subsp. japonica (Rice)).